The following is a 381-amino-acid chain: Dynactin subunit 2 (381 aa).

A disordered region spans residues 15 to 39 (DQPDVYETPDAPESETSDFYDEEPA). Residues 24–39 (DAPESETSDFYDEEPA) show a composition bias toward acidic residues. Coiled-coil stretches lie at residues 100–216 (QKCL…AVGA) and 350–381 (GVQEAFAQNLENVNKEVKKLDERMKTLQEKVK).

This sequence belongs to the dynactin subunit 2 family. As to quaternary structure, subunit of dynactin, a multiprotein complex associated with dynein.

Its subcellular location is the cytoplasm. It localises to the cytoskeleton. The protein localises to the membrane. Functionally, modulates cytoplasmic dynein binding to an organelle, and plays a role in prometaphase chromosome alignment and spindle organization during mitosis. This is Dynactin subunit 2 from Aedes aegypti (Yellowfever mosquito).